The primary structure comprises 208 residues: Large ribosomal subunit protein bL25 (208 aa).

The protein belongs to the bacterial ribosomal protein bL25 family. CTC subfamily. As to quaternary structure, part of the 50S ribosomal subunit; part of the 5S rRNA/L5/L18/L25 subcomplex. Contacts the 5S rRNA. Binds to the 5S rRNA independently of L5 and L18.

Functionally, this is one of the proteins that binds to the 5S RNA in the ribosome where it forms part of the central protuberance. This Syntrophotalea carbinolica (strain DSM 2380 / NBRC 103641 / GraBd1) (Pelobacter carbinolicus) protein is Large ribosomal subunit protein bL25.